We begin with the raw amino-acid sequence, 361 residues long: Holliday junction branch migration complex subunit RuvB (361 aa).

The interval 1-181 is large ATPase domain (RuvB-L); sequence MKDQRLLDSV…FGIPIRLNFY (181 aa). Residues Leu20, Arg21, Gly62, Lys65, Thr66, Thr67, 128–130, Arg171, Tyr181, and Arg218 contribute to the ATP site; that span reads EDY. Thr66 contributes to the Mg(2+) binding site. A small ATPAse domain (RuvB-S) region spans residues 182–252; sequence TIEELEYIVQ…VADEALSRLE (71 aa). The segment at 255–361 is head domain (RuvB-H); the sequence is HLGLDPLDRR…QTTLWDEADE (107 aa). Positions 291, 310, and 315 each coordinate DNA.

This sequence belongs to the RuvB family. As to quaternary structure, homohexamer. Forms an RuvA(8)-RuvB(12)-Holliday junction (HJ) complex. HJ DNA is sandwiched between 2 RuvA tetramers; dsDNA enters through RuvA and exits via RuvB. An RuvB hexamer assembles on each DNA strand where it exits the tetramer. Each RuvB hexamer is contacted by two RuvA subunits (via domain III) on 2 adjacent RuvB subunits; this complex drives branch migration. In the full resolvosome a probable DNA-RuvA(4)-RuvB(12)-RuvC(2) complex forms which resolves the HJ.

Its subcellular location is the cytoplasm. It carries out the reaction ATP + H2O = ADP + phosphate + H(+). The RuvA-RuvB-RuvC complex processes Holliday junction (HJ) DNA during genetic recombination and DNA repair, while the RuvA-RuvB complex plays an important role in the rescue of blocked DNA replication forks via replication fork reversal (RFR). RuvA specifically binds to HJ cruciform DNA, conferring on it an open structure. The RuvB hexamer acts as an ATP-dependent pump, pulling dsDNA into and through the RuvAB complex. RuvB forms 2 homohexamers on either side of HJ DNA bound by 1 or 2 RuvA tetramers; 4 subunits per hexamer contact DNA at a time. Coordinated motions by a converter formed by DNA-disengaged RuvB subunits stimulates ATP hydrolysis and nucleotide exchange. Immobilization of the converter enables RuvB to convert the ATP-contained energy into a lever motion, pulling 2 nucleotides of DNA out of the RuvA tetramer per ATP hydrolyzed, thus driving DNA branch migration. The RuvB motors rotate together with the DNA substrate, which together with the progressing nucleotide cycle form the mechanistic basis for DNA recombination by continuous HJ branch migration. Branch migration allows RuvC to scan DNA until it finds its consensus sequence, where it cleaves and resolves cruciform DNA. The chain is Holliday junction branch migration complex subunit RuvB from Bartonella quintana (strain Toulouse) (Rochalimaea quintana).